Consider the following 321-residue polypeptide: Annexin A5 (321 aa).

Position 2 is an N-acetylalanine (alanine 2). Annexin repeat units lie at residues 15-86, 87-158, 170-242, and 246-317; these read FDER…ALMK, PSRL…VLLQ, AQVE…AVVK, and SIPA…LLCG. A Glycyl lysine isopeptide (Lys-Gly) (interchain with G-Cter in SUMO1); alternate cross-link involves residue lysine 29. Lysine 29 is covalently cross-linked (Glycyl lysine isopeptide (Lys-Gly) (interchain with G-Cter in SUMO2); alternate). N6-acetyllysine is present on residues lysine 70, lysine 76, lysine 79, lysine 97, and lysine 101. Lysine 290 bears the N6-succinyllysine mark. Residues 314–320 carry the [IL]-x-C-x-x-[DE] motif motif; sequence LLCGGED.

Belongs to the annexin family. Monomer. Binds ATRX and EIF5B. S-nitrosylation is induced by interferon-gamma and oxidatively-modified low-densitity lipoprotein (LDL(ox)) possibly implicating the iNOS-S100A8/9 transnitrosylase complex.

Its function is as follows. This protein is an anticoagulant protein that acts as an indirect inhibitor of the thromboplastin-specific complex, which is involved in the blood coagulation cascade. The protein is Annexin A5 (ANXA5) of Bos taurus (Bovine).